Reading from the N-terminus, the 544-residue chain is ATP synthase subunit alpha (544 aa).

Residue G173–T180 coordinates ATP. Positions G513–G544 are disordered. The segment covering P524–Q535 has biased composition (acidic residues).

It belongs to the ATPase alpha/beta chains family. F-type ATPases have 2 components, CF(1) - the catalytic core - and CF(0) - the membrane proton channel. CF(1) has five subunits: alpha(3), beta(3), gamma(1), delta(1), epsilon(1). CF(0) has three main subunits: a(1), b(2) and c(9-12). The alpha and beta chains form an alternating ring which encloses part of the gamma chain. CF(1) is attached to CF(0) by a central stalk formed by the gamma and epsilon chains, while a peripheral stalk is formed by the delta and b chains.

It localises to the cell membrane. The catalysed reaction is ATP + H2O + 4 H(+)(in) = ADP + phosphate + 5 H(+)(out). Produces ATP from ADP in the presence of a proton gradient across the membrane. The alpha chain is a regulatory subunit. This is ATP synthase subunit alpha from Beutenbergia cavernae (strain ATCC BAA-8 / DSM 12333 / CCUG 43141 / JCM 11478 / NBRC 16432 / NCIMB 13614 / HKI 0122).